A 79-amino-acid polypeptide reads, in one-letter code: Morintide mO1 (79 aa).

A signal peptide spans 1 to 20 (MAKLSFLSLFLLCLVATATA). Residues 21 to 63 (QNCGRQAGNRACANQLCCSQYGFCGSTSEYCSRANGCQSNCRG) enclose the Chitin-binding type-1 domain. 4 cysteine pairs are disulfide-bonded: cysteine 23/cysteine 38, cysteine 32/cysteine 44, cysteine 37/cysteine 51, and cysteine 57/cysteine 61. The propeptide occupies 64–79 (GGGADGAGGEAGGGGP).

Leaves (at protein level).

Its function is as follows. Chitin-binding protein which functions in defense against chitin-containing fungal pathogens. Inhibits the growth of budding hyphae in A.alternata and A.brassiciola. The chain is Morintide mO1 from Moringa oleifera (Horseradish tree).